Reading from the N-terminus, the 555-residue chain is DNA-directed primase/polymerase protein (555 aa).

Residues 1–22 (MKRKWEATLKQIEERASHYERK) adopt a coiled-coil conformation. Substrate is bound by residues Arg76, 114–116 (DLE), and 165–169 (KFSRH). Residues Asp114 and Glu116 each coordinate Mn(2+). The segment at 210–230 (ETTGHEFTHFSETPSEQGTCF) is disordered. Polar residues predominate over residues 219 to 230 (FSETPSEQGTCF). The residue at position 255 (Ser255) is a Phosphoserine. Residues 288 to 291 (RNFR) and Lys297 contribute to the substrate site. Positions 418, 425, 445, and 450 each coordinate Zn(2+). The Zinc knuckle motif signature appears at 418–451 (CENIGRAHRSNNIMILVDLKNEVWYQKCHDPVCK). The interval 480 to 503 (TDTTADTETKSPHGPSSSVLSKGA) is disordered. An interaction with RPA1 region spans residues 480 to 555 (TDTTADTETK…DELLIEVLQE (76 aa)). Short sequence motifs (RPA1-binding motif) lie at residues 509-523 (WDNGIDDTYILEATE) and 543-551 (EIPDELLIE).

The protein belongs to the eukaryotic-type primase small subunit family. In terms of assembly, interacts with RPA1; leading to recruitment to chromatin and stimulate DNA primase activity. Interacts with SSBP1. Interacts with POLDIP2; leading to enhance DNA polymerase activity. Mn(2+) serves as cofactor.

It localises to the nucleus. The protein localises to the mitochondrion matrix. Its subcellular location is the chromosome. It catalyses the reaction ssDNA + n NTP = ssDNA/pppN(pN)n-1 hybrid + (n-1) diphosphate.. The catalysed reaction is DNA(n) + a 2'-deoxyribonucleoside 5'-triphosphate = DNA(n+1) + diphosphate. Its function is as follows. DNA primase and DNA polymerase required to tolerate replication-stalling lesions by bypassing them. Required to facilitate mitochondrial and nuclear replication fork progression by initiating de novo DNA synthesis using dNTPs and acting as an error-prone DNA polymerase able to bypass certain DNA lesions. Shows a high capacity to tolerate DNA damage lesions such as 8oxoG and abasic sites in DNA. Provides different translesion synthesis alternatives when DNA replication is stalled: able to synthesize DNA primers downstream of lesions, such as ultraviolet (UV) lesions, R-loops and G-quadruplexes, to allow DNA replication to continue. Can also realign primers ahead of 'unreadable lesions' such as abasic sites and 6-4 photoproduct (6-4 pyrimidine-pyrimidinone), thereby skipping the lesion. Repriming avoids fork degradation while leading to accumulation of internal ssDNA gaps behind the forks. Also able to incorporate nucleotides opposite DNA lesions such as 8oxoG, like a regular translesion synthesis DNA polymerase. Also required for reinitiating stalled forks after UV damage during nuclear DNA replication. Required for mitochondrial DNA (mtDNA) synthesis and replication, by reinitiating synthesis after UV damage or in the presence of chain-terminating nucleotides. Prevents APOBEC family-mediated DNA mutagenesis by repriming downstream of abasic site to prohibit error-prone translesion synthesis. Has non-overlapping function with POLH. In addition to its role in DNA damage response, also required to maintain efficient nuclear and mitochondrial DNA replication in unperturbed cells. In Bos taurus (Bovine), this protein is DNA-directed primase/polymerase protein.